Consider the following 401-residue polypeptide: Renin-2 (401 aa).

The signal sequence occupies residues 1-25 (MDRRRMPLWALLLLWSPCTFSLPTG). Residues 26–63 (TTFERIPLKKMPSVREILEERGVDMTRLSAEWDVFTKR) constitute a propeptide, activation peptide. The Peptidase A1 domain occupies 83 to 398 (YYGEIGIGTP…DRHNNRIGFA (316 aa)). Asp-101 is an active-site residue. 2 cysteine pairs are disulfide-bonded: Cys-114–Cys-121 and Cys-277–Cys-281. Residue Asp-286 is part of the active site. The cysteines at positions 320 and 357 are disulfide-linked.

This sequence belongs to the peptidase A1 family. In terms of assembly, dimer of a heavy chain and a light chain joined by a disulfide bond. As to expression, submandibular gland.

The protein resides in the secreted. It carries out the reaction Cleavage of Leu-|-Xaa bond in angiotensinogen to generate angiotensin I.. Renin is a highly specific endopeptidase, related to pepsin, whose only known function is to generate angiotensin I from angiotensinogen in the plasma, initiating a cascade of reactions that produce an elevation of blood pressure and increased sodium retention by the kidney. This Mus musculus (Mouse) protein is Renin-2.